Consider the following 77-residue polypeptide: Putative defensin-like protein 185 (77 aa).

The signal sequence occupies residues 1–22 (MKNSSILLLLVVFFVISSSGEA). Cystine bridges form between Cys25–Cys77, Cys31–Cys54, Cys40–Cys71, and Cys44–Cys73.

Belongs to the DEFL family.

It is found in the secreted. The polypeptide is Putative defensin-like protein 185 (LCR39) (Arabidopsis thaliana (Mouse-ear cress)).